The primary structure comprises 373 residues: Mannitol-1-phosphate 5-dehydrogenase (373 aa).

Residue 3-14 coordinates NAD(+); that stretch reads ALHFGAGNIGRG.

Belongs to the mannitol dehydrogenase family.

It catalyses the reaction D-mannitol 1-phosphate + NAD(+) = beta-D-fructose 6-phosphate + NADH + H(+). The polypeptide is Mannitol-1-phosphate 5-dehydrogenase (mtlD) (Bacillus subtilis (strain 168)).